The following is a 215-amino-acid chain: Ribonuclease T (215 aa).

One can recognise an Exonuclease domain in the interval Val-20–Phe-194. Residues Asp-23, Glu-25, His-181, and Asp-186 each coordinate Mg(2+). The Proton donor/acceptor role is filled by His-181.

It belongs to the RNase T family. Homodimer. Mg(2+) serves as cofactor.

Trims short 3' overhangs of a variety of RNA species, leaving a one or two nucleotide 3' overhang. Responsible for the end-turnover of tRNA: specifically removes the terminal AMP residue from uncharged tRNA (tRNA-C-C-A). Also appears to be involved in tRNA biosynthesis. The protein is Ribonuclease T of Citrobacter koseri (strain ATCC BAA-895 / CDC 4225-83 / SGSC4696).